We begin with the raw amino-acid sequence, 441 residues long: tRNA modification GTPase MnmE (441 aa).

(6S)-5-formyl-5,6,7,8-tetrahydrofolate-binding residues include arginine 23, glutamate 81, and lysine 121. The region spanning 218–363 (GFRVAIVGPP…LESWIAAFVS (146 aa)) is the TrmE-type G domain. Position 228 (asparagine 228) interacts with K(+). GTP-binding positions include 228 to 233 (NAGKSS), 247 to 253 (TDIAGTT), 272 to 275 (DTAG), and 326 to 329 (NKAD). Serine 232 contacts Mg(2+). 3 residues coordinate K(+): threonine 247, isoleucine 249, and threonine 252. Threonine 253 is a binding site for Mg(2+). A (6S)-5-formyl-5,6,7,8-tetrahydrofolate-binding site is contributed by lysine 441.

This sequence belongs to the TRAFAC class TrmE-Era-EngA-EngB-Septin-like GTPase superfamily. TrmE GTPase family. As to quaternary structure, homodimer. Heterotetramer of two MnmE and two MnmG subunits. K(+) serves as cofactor.

Its subcellular location is the cytoplasm. Its function is as follows. Exhibits a very high intrinsic GTPase hydrolysis rate. Involved in the addition of a carboxymethylaminomethyl (cmnm) group at the wobble position (U34) of certain tRNAs, forming tRNA-cmnm(5)s(2)U34. This Hyphomonas neptunium (strain ATCC 15444) protein is tRNA modification GTPase MnmE.